The primary structure comprises 273 residues: Imidazole glycerol phosphate synthase subunit HisF (273 aa).

Active-site residues include Asp-11 and Asp-134.

It belongs to the HisA/HisF family. As to quaternary structure, heterodimer of HisH and HisF.

It localises to the cytoplasm. It catalyses the reaction 5-[(5-phospho-1-deoxy-D-ribulos-1-ylimino)methylamino]-1-(5-phospho-beta-D-ribosyl)imidazole-4-carboxamide + L-glutamine = D-erythro-1-(imidazol-4-yl)glycerol 3-phosphate + 5-amino-1-(5-phospho-beta-D-ribosyl)imidazole-4-carboxamide + L-glutamate + H(+). Its pathway is amino-acid biosynthesis; L-histidine biosynthesis; L-histidine from 5-phospho-alpha-D-ribose 1-diphosphate: step 5/9. Functionally, IGPS catalyzes the conversion of PRFAR and glutamine to IGP, AICAR and glutamate. The HisF subunit catalyzes the cyclization activity that produces IGP and AICAR from PRFAR using the ammonia provided by the HisH subunit. This Methanosarcina acetivorans (strain ATCC 35395 / DSM 2834 / JCM 12185 / C2A) protein is Imidazole glycerol phosphate synthase subunit HisF.